A 200-amino-acid polypeptide reads, in one-letter code: MAPQGDDTVFQPKDAIKSGVSGALFSGGAGLLMASLRTSMKKNNVGSMHVFTHGGGTIISFTLAGGIYRFAQQASANLREKEDGWNHAIGAFLGGSVMGLRSLRFPVILGFGAMAGSVVGAFAFSGGLTGWGRDPNVDEFERKEAMRLNRRRPVEETLAEVGEGRGIYPPGYQERRRQRLLEKYGVEVKPVSADPNVASA.

The next 3 membrane-spanning stretches (helical) occupy residues 16–36, 48–68, and 105–125; these read IKSG…MASL, MHVF…GGIY, and FPVI…FAFS.

In terms of assembly, complex I is composed of about 40 different subunits.

It is found in the mitochondrion inner membrane. It catalyses the reaction a ubiquinone + NADH + 5 H(+)(in) = a ubiquinol + NAD(+) + 4 H(+)(out). In terms of biological role, transfer of electrons from NADH to the respiratory chain. The immediate electron acceptor for the enzyme is believed to be ubiquinone. In Neurospora crassa (strain ATCC 24698 / 74-OR23-1A / CBS 708.71 / DSM 1257 / FGSC 987), this protein is NADH-ubiquinone oxidoreductase 21.3 kDa subunit.